Here is a 336-residue protein sequence, read N- to C-terminus: MSEIRTLGEFIVAKQHDFPHASGELSSLIGSIKLAAKIVNREINKAGLVDITGASGEENIQGEQQQKLDVYANDKFKSALEARDQVCGVASEEEDEAVAFNKELNKNAKYVVLMDPLDGSSNIDVNVSVGTIFSIYRRISPIGTPATEEDFLQPGHKQVAAGYIIYGSSTMLVYTTGNGVHGFTYDPSLGVFCLSHENMQIPKDGNIYSINEGNYIRFPEGIKQYLKFCQESKPEDNRPYTSRYIGSLVADFHRNLLKGGIYLYPSTQAYPNGKLRLLYECNPMAMLIEEAGGKATDGEQRILDIKPSELHQRVPFFVGSTNMVNKVHAFLDEWRD.

Mg(2+) is bound by residues E92, D115, L117, and D118. Substrate-binding positions include D118–S121, N211, Y244, Y262–Y264, and K274. E280 serves as a coordination point for Mg(2+).

It belongs to the FBPase class 1 family. In terms of assembly, homotetramer. It depends on Mg(2+) as a cofactor.

The protein localises to the cytoplasm. The enzyme catalyses beta-D-fructose 1,6-bisphosphate + H2O = beta-D-fructose 6-phosphate + phosphate. It functions in the pathway carbohydrate biosynthesis; gluconeogenesis. The sequence is that of Fructose-1,6-bisphosphatase class 1 from Aliivibrio fischeri (strain ATCC 700601 / ES114) (Vibrio fischeri).